Reading from the N-terminus, the 403-residue chain is Decapping and exoribonuclease protein 1 (403 aa).

Glu223 provides a ligand contact to a divalent metal cation. Residue Glu260 participates in substrate binding. A divalent metal cation is bound by residues Asp262, Glu273, and Ile274. Lys275 and Gln297 together coordinate substrate.

Belongs to the DXO/Dom3Z family. It depends on a divalent metal cation as a cofactor.

It is found in the cytoplasm. It carries out the reaction a 5'-end NAD(+)-phospho-ribonucleoside in mRNA + H2O = a 5'-end phospho-ribonucleoside in mRNA + NAD(+) + H(+). The catalysed reaction is a 5'-end (N(7)-methyl 5'-triphosphoguanosine)-ribonucleoside-ribonucleotide in mRNA + H2O = a (N(7)-methyl 5'-triphosphoguanosine)-nucleoside + a 5'-end phospho-ribonucleoside in mRNA + H(+). Functionally, decapping enzyme for NAD-capped RNAs: specifically hydrolyzes the nicotinamide adenine dinucleotide (NAD) cap from a subset of RNAs by removing the entire NAD moiety from the 5'-end of an NAD-capped RNA. The NAD-cap is present at the 5'-end of some RNAs and snoRNAs. In contrast to the canonical 5'-end N7 methylguanosine (m7G) cap, the NAD cap promotes mRNA decay. Also acts as a non-canonical decapping enzyme that removes the entire cap structure of m7G capped or incompletely capped RNAs and mediates their subsequent degradation. Has decapping and 5'-3' exonuclease activities. Has decapping activity toward incomplete 5'-end cap mRNAs such as unmethylated 5'-end-capped RNA to release GpppN and 5'-end monophosphate RNA. The 5'-end monophosphate RNA is then degraded by the 5'-3' exoribonuclease activity, enabling this enzyme to decap and degrade incompletely capped mRNAs. The polypeptide is Decapping and exoribonuclease protein 1 (Kluyveromyces lactis (strain ATCC 8585 / CBS 2359 / DSM 70799 / NBRC 1267 / NRRL Y-1140 / WM37) (Yeast)).